Consider the following 314-residue polypeptide: MLGSSGRRLLTTVLQAQRWPFQPSRDMRLVQFQAPHLAGPHLGLESGNGGGVIDLNAFEPTLPKTMVEFLEQGEATLSVVRRALATQLPVLPRSEVTFLAPVTRPDKVVCVGMNYADHCREQNVPVPKEPIIFSKFASAIVGPYDNIILPPESQEVDWEVELAVVIGKRGKYIKATDAMAHVAGFTVAHDVSARDWQMGRNGKQWLLGKTFDTFCPLGPALVTKDSVADPHNLKICCRVNGELMQSSNTNQMVFKTEELITWVSQFVTLYPGDIILTGTPPGVGVFRKPPVFLKKGDEVQCEIEELGVIINKVV.

The N-terminal 84 residues, 1–84 (MLGSSGRRLL…ATLSVVRRAL (84 aa)), are a transit peptide targeting the mitochondrion. The Mg(2+) site is built by Glu159, Glu161, and Asp190. At Lys203 the chain carries N6-acetyllysine; alternate. Lys203 is modified (N6-succinyllysine; alternate). Lys234 carries the post-translational modification N6-acetyllysine.

It belongs to the FAH family. Requires Mg(2+) as cofactor. It depends on Mn(2+) as a cofactor.

The protein localises to the mitochondrion. The catalysed reaction is oxaloacetate = enol-oxaloacetate. Functionally, tautomerase that converts enol-oxaloacetate, a strong inhibitor of succinate dehydrogenase, to the physiological keto form of oxaloacetate. It is thereby required to maximize aerobic respiration efficiency by preventing succinate dehydrogenase inhibition. The sequence is that of Oxaloacetate tautomerase FAHD2B, mitochondrial from Bos taurus (Bovine).